The primary structure comprises 412 residues: Argininosuccinate synthase (412 aa).

ATP is bound by residues 20-28 (AYSGGLDTS) and alanine 48. L-citrulline-binding residues include tyrosine 100 and serine 105. Glycine 130 provides a ligand contact to ATP. The L-aspartate site is built by threonine 132, asparagine 136, and aspartate 137. Asparagine 136 is a binding site for L-citrulline. 5 residues coordinate L-citrulline: arginine 140, serine 189, serine 198, glutamate 274, and tyrosine 286.

The protein belongs to the argininosuccinate synthase family. Type 1 subfamily. As to quaternary structure, homotetramer.

Its subcellular location is the cytoplasm. It catalyses the reaction L-citrulline + L-aspartate + ATP = 2-(N(omega)-L-arginino)succinate + AMP + diphosphate + H(+). Its pathway is amino-acid biosynthesis; L-arginine biosynthesis; L-arginine from L-ornithine and carbamoyl phosphate: step 2/3. This is Argininosuccinate synthase from Shewanella pealeana (strain ATCC 700345 / ANG-SQ1).